The following is a 149-amino-acid chain: L-alanine exporter AlaE (149 aa).

The next 4 helical transmembrane spans lie at 16–36 (FAMVVYCSVVNMLIEIFLSGM), 46–66 (LVAIPVNILIAWPYGMYRDAI), 85–105 (VLAYVTFQSPVYVAILLTVGA), and 112–132 (AAVSSNIVISMLMGAVYGYFL).

Belongs to the AlaE exporter family.

It localises to the cell inner membrane. Exports L-alanine. The protein is L-alanine exporter AlaE of Citrobacter koseri (strain ATCC BAA-895 / CDC 4225-83 / SGSC4696).